The sequence spans 278 residues: Rhomboid protease GlpG (278 aa).

The next 6 helical transmembrane spans lie at 95–115 (GPLT…MQIV), 143–163 (AFLH…WYLA), 170–190 (LGTG…GWGQ), 192–212 (LFSG…MGYV), 224–241 (ISLP…LVAG), and 245–267 (ILGL…LMAF). Residue serine 202 is the Nucleophile of the active site. Histidine 255 is a catalytic residue.

It belongs to the peptidase S54 family.

It localises to the cell inner membrane. The catalysed reaction is Cleaves type-1 transmembrane domains using a catalytic dyad composed of serine and histidine that are contributed by different transmembrane domains.. In terms of biological role, rhomboid-type serine protease that catalyzes intramembrane proteolysis. The polypeptide is Rhomboid protease GlpG (Yersinia enterocolitica serotype O:8 / biotype 1B (strain NCTC 13174 / 8081)).